The primary structure comprises 430 residues: Histidine--tRNA ligase (430 aa).

Belongs to the class-II aminoacyl-tRNA synthetase family. In terms of assembly, homodimer.

The protein resides in the cytoplasm. It carries out the reaction tRNA(His) + L-histidine + ATP = L-histidyl-tRNA(His) + AMP + diphosphate + H(+). The polypeptide is Histidine--tRNA ligase (Chlamydia abortus (strain DSM 27085 / S26/3) (Chlamydophila abortus)).